A 443-amino-acid polypeptide reads, in one-letter code: MSKTYHFIGIKGSGMSALALMLHQMGHNVQGSDVDKYYFTQRGLEQAGVTILPFSPNNISEDLEIIAGNAFRPDNNEELAYVIEKGYQFKRYHEFLGDFMRQFTSLGVAGAHGKTSTTGLLAHVLKNITDTSFLIGDGTGRGSANANYFVFEADEYERHFMPYHPEYSIITNIDFDHPDYFTGLEDVFNAFNDYAKQVQKGLFIYGEDPKLHEITSEAPIYYYGFEDSNDFIAKDITRTVNGSDFKVFYNQEEIGQFHVPAYGKHNILNATAVIANLYIMGIDMALVAEHLKTFSGVKRRFTEKIIDDTVIIDDFAHHPTEIIATLDAARQKYPSKEIVAIFQPHTFTRTIALLDEFAHALSQADSVYLAQIYGSAREVDNGEVKVEDLAAKIVKHSDLVTVENVSPLLNHDNAVYVFMGAGDIQLYERSFEELLANLTKNTQ.

ATP is bound at residue 110-116 (GAHGKTS).

It belongs to the MurCDEF family.

The protein localises to the cytoplasm. The catalysed reaction is UDP-N-acetyl-alpha-D-muramate + L-alanine + ATP = UDP-N-acetyl-alpha-D-muramoyl-L-alanine + ADP + phosphate + H(+). It functions in the pathway cell wall biogenesis; peptidoglycan biosynthesis. Its function is as follows. Cell wall formation. The polypeptide is UDP-N-acetylmuramate--L-alanine ligase (Streptococcus agalactiae serotype V (strain ATCC BAA-611 / 2603 V/R)).